The following is a 524-amino-acid chain: 2-isopropylmalate synthase (524 aa).

The Pyruvate carboxyltransferase domain occupies 5-267 (VIIFDTTLRD…HTNIRHSEIH (263 aa)). Mn(2+) contacts are provided by D14, H202, H204, and N238. Positions 392 to 524 (KLEYLGVQSG…KTDKINTESV (133 aa)) are regulatory domain.

The protein belongs to the alpha-IPM synthase/homocitrate synthase family. LeuA type 1 subfamily. In terms of assembly, homodimer. Requires Mn(2+) as cofactor.

Its subcellular location is the cytoplasm. It catalyses the reaction 3-methyl-2-oxobutanoate + acetyl-CoA + H2O = (2S)-2-isopropylmalate + CoA + H(+). It functions in the pathway amino-acid biosynthesis; L-leucine biosynthesis; L-leucine from 3-methyl-2-oxobutanoate: step 1/4. Catalyzes the condensation of the acetyl group of acetyl-CoA with 3-methyl-2-oxobutanoate (2-ketoisovalerate) to form 3-carboxy-3-hydroxy-4-methylpentanoate (2-isopropylmalate). The chain is 2-isopropylmalate synthase from Aeromonas salmonicida (strain A449).